The sequence spans 115 residues: NADH-ubiquinone oxidoreductase chain 3 (115 aa).

A run of 3 helical transmembrane segments spans residues 4–24 (LVTM…AFWL), 55–75 (FFLV…LLPM), and 86–106 (TMTL…AYEW).

This sequence belongs to the complex I subunit 3 family. As to quaternary structure, core subunit of respiratory chain NADH dehydrogenase (Complex I) which is composed of 45 different subunits. Interacts with TMEM186. Interacts with TMEM242.

The protein localises to the mitochondrion inner membrane. It catalyses the reaction a ubiquinone + NADH + 5 H(+)(in) = a ubiquinol + NAD(+) + 4 H(+)(out). Functionally, core subunit of the mitochondrial membrane respiratory chain NADH dehydrogenase (Complex I) which catalyzes electron transfer from NADH through the respiratory chain, using ubiquinone as an electron acceptor. Essential for the catalytic activity of complex I. The chain is NADH-ubiquinone oxidoreductase chain 3 from Nelsonia neotomodon (Diminutive woodrat).